The chain runs to 626 residues: Serine/threonine-protein kinase PknH (626 aa).

Residues 1 to 403 (MSDAQDSRVG…QTPRKTNPWP (403 aa)) are Cytoplasmic-facing. The 261-residue stretch at 16 to 276 (YHLKRLLGRG…DLALAAHEAL (261 aa)) folds into the Protein kinase domain. ATP-binding positions include 22 to 30 (LGRGGMGEV) and K45. D139 serves as the catalytic Proton acceptor. T170 carries the phosphothreonine modification. Residues 292–396 (QESTLPAPPK…GGPSPWAQTP (105 aa)) form a disordered region. 2 stretches are compositionally biased toward pro residues: residues 297 to 308 (PAPPKPVPPPTM) and 316 to 342 (RQPP…PAQP). Low complexity predominate over residues 343 to 355 (GPAGQRPGPTGQP). The chain crosses the membrane as a helical span at residues 404–424 (LVAGAAAVVLVLVLGAIGIWI). The Extracellular segment spans residues 425-626 (AIRPKPVQPP…AKIVDKVNKE (202 aa)). 2 cysteine pairs are disulfide-bonded: C482–C545 and C587–C604.

Belongs to the protein kinase superfamily. Ser/Thr protein kinase family. The cofactor is a divalent metal cation. In terms of processing, autophosphorylated on threonine and serine residues. Dephosphorylated by PstP.

It localises to the cell membrane. The catalysed reaction is L-seryl-[protein] + ATP = O-phospho-L-seryl-[protein] + ADP + H(+). It carries out the reaction L-threonyl-[protein] + ATP = O-phospho-L-threonyl-[protein] + ADP + H(+). With respect to regulation, inhibited by the kinase inhibitors staurosporine and H-7. Functionally, may regulate bacterial growth in response to external signals to facilitate adaptation to the host environment. In vitro, phosphorylates several substrates such as EmbR, DevR (DosR), DacB1 and Rv0681. This Mycobacterium tuberculosis (strain ATCC 25618 / H37Rv) protein is Serine/threonine-protein kinase PknH (pknH).